The primary structure comprises 122 residues: Ubiquitin-related modifier 1 (122 aa).

Residues Pro-33–Asp-48 show a composition bias toward polar residues. The tract at residues Pro-33–Pro-52 is disordered. Gly-122 bears the 1-thioglycine mark. Gly-122 participates in a covalent cross-link: Glycyl lysine isopeptide (Gly-Lys) (interchain with K-? in acceptor proteins).

This sequence belongs to the URM1 family. Post-translationally, C-terminal thiocarboxylation occurs in 2 steps, it is first acyl-adenylated (-COAMP) via the hesA/moeB/thiF part of UBA4, then thiocarboxylated (-COSH) via the rhodanese domain of UBA4.

Its subcellular location is the cytoplasm. Its pathway is tRNA modification; 5-methoxycarbonylmethyl-2-thiouridine-tRNA biosynthesis. In terms of biological role, acts as a sulfur carrier required for 2-thiolation of mcm(5)S(2)U at tRNA wobble positions of cytosolic tRNA(Lys), tRNA(Glu) and tRNA(Gln). Serves as sulfur donor in tRNA 2-thiolation reaction by being thiocarboxylated (-COSH) at its C-terminus by the MOCS3 homolog UBA4. The sulfur is then transferred to tRNA to form 2-thiolation of mcm(5)S(2)U. Prior mcm(5) tRNA modification by the elongator complex is required for 2-thiolation. Also acts as a ubiquitin-like protein (UBL) that is covalently conjugated via an isopeptide bond to lysine residues of target proteins such as AHP1. The thiocarboxylated form serves as substrate for conjugation and oxidative stress specifically induces the formation of UBL-protein conjugates. This Laccaria bicolor (strain S238N-H82 / ATCC MYA-4686) (Bicoloured deceiver) protein is Ubiquitin-related modifier 1.